We begin with the raw amino-acid sequence, 445 residues long: Trigger factor (445 aa).

Residues 162-247 enclose the PPIase FKBP-type domain; it reads GDQVTIDAIG…IKAVHTAEPT (86 aa).

Belongs to the FKBP-type PPIase family. Tig subfamily.

Its subcellular location is the cytoplasm. The enzyme catalyses [protein]-peptidylproline (omega=180) = [protein]-peptidylproline (omega=0). Functionally, involved in protein export. Acts as a chaperone by maintaining the newly synthesized protein in an open conformation. Functions as a peptidyl-prolyl cis-trans isomerase. This Rickettsia peacockii (strain Rustic) protein is Trigger factor.